The primary structure comprises 103 residues: Glycoprotein 24B (103 aa).

It belongs to the csb family. In terms of processing, O-glycosylated.

Its subcellular location is the cell surface. Its function is as follows. Cell-cell adhesion during early development. This Dictyostelium discoideum (Social amoeba) protein is Glycoprotein 24B (csbB).